Reading from the N-terminus, the 122-residue chain is Phospholipase A2 crotoxin basic subunit CBb (122 aa).

Disulfide bonds link Cys26–Cys115, Cys28–Cys44, Cys43–Cys95, Cys49–Cys122, Cys50–Cys88, Cys57–Cys81, and Cys75–Cys86. Tyr27, Gly29, and Gly31 together coordinate Ca(2+). The active site involves His47. Asp48 is a binding site for Ca(2+). Residue Asp89 is part of the active site.

The protein belongs to the phospholipase A2 family. Group II subfamily. D49 sub-subfamily. As to quaternary structure, heterodimer of one of the acidic (CA1, CA2, CA3 or CA4) and one of the basic (CBa1, CBa2, CBb, CBc or CBd) subunits; non-covalently linked. The acidic subunit is non-toxic, without enzymatic activity and comprises 3 peptides that are cross-linked by 5 disulfide bridges. The basic subunit is toxic, has phospholipase A2 activity and is composed of a single chain. Multiple variants of each subunit give different crotoxin complexes that can be subdivided into 2 classes: (1) those of high toxicity, low PLA2 activity (CBb, CBc and CBd linked with high affinity to any CA) and high stability (K(d)=4.5 nM) and (2) those of moderate toxicity, high PLA2 activity (CBa2 linked with low affinity to any CA) and low stability (K(d)=25 nM). Requires Ca(2+) as cofactor. Expressed by the venom gland.

The protein resides in the secreted. It catalyses the reaction a 1,2-diacyl-sn-glycero-3-phosphocholine + H2O = a 1-acyl-sn-glycero-3-phosphocholine + a fatty acid + H(+). Heterodimer CA-CB: Crotoxin is a potent presynaptic neurotoxin that possesses phospholipase A2 (PLA2) activity and exerts a lethal action by blocking neuromuscular transmission. It consists of a non-covalent association of a basic and weakly toxic PLA2 subunit (CBa2, CBb, CBc, or CBd), with a small acidic, non-enzymatic and non-toxic subunit (CA1, CA2, CA3 or CA4). The complex acts by binding to a specific 48-kDa protein (R48) receptor located on presynaptic membranes, forming a transient ternary complex CA-CB-R48, followed by dissociation of the CA-CB complex and release of the CA subunit. At equilibrium, only the CB subunits remain associated with the specific crotoxin receptor. In addition to neurotoxicity, crotoxin has been found to exert myotoxicity, nephrotoxicity, and cardiovascular toxicity. Moreover, anti-inflammatory, immunomodulatory, anti-tumor and analgesic effects of crotoxin have also been reported. Its function is as follows. Monomer CBb: The basic subunit of crotoxin is a snake venom phospholipase A2 (PLA2) that exhibits weak neurotoxicity (10-fold less than the heterodimer) and strong anticoagulant effects by binding to factor Xa (F10) and inhibiting the prothrombinase activity. In addition, it shows the same effects described for the heterodimer and binds the nucleotide-binding domain (NBD1) of CFTR chloride channels and increases the channel current. PLA2 catalyzes the calcium-dependent hydrolysis of the 2-acyl groups in 3-sn-phosphoglycerides. The chain is Phospholipase A2 crotoxin basic subunit CBb from Crotalus durissus terrificus (South American rattlesnake).